The chain runs to 205 residues: Holliday junction branch migration complex subunit RuvA (205 aa).

The interval 1–63 (MIGMLRGHVE…QDAITLFGFG (63 aa)) is domain I. Positions 64–142 (TLASKRMFLQ…LSQIEGSSAT (79 aa)) are domain II. Positions 143–145 (AST) are flexible linker. Residues 146–205 (PEDTGAEQVVEGLMSLGWHQQDAAHAVQTVCADNQIETPLNAKDVPRVLKLALTSLDRGR) are domain III.

Belongs to the RuvA family. In terms of assembly, homotetramer. Forms an RuvA(8)-RuvB(12)-Holliday junction (HJ) complex. HJ DNA is sandwiched between 2 RuvA tetramers; dsDNA enters through RuvA and exits via RuvB. An RuvB hexamer assembles on each DNA strand where it exits the tetramer. Each RuvB hexamer is contacted by two RuvA subunits (via domain III) on 2 adjacent RuvB subunits; this complex drives branch migration. In the full resolvosome a probable DNA-RuvA(4)-RuvB(12)-RuvC(2) complex forms which resolves the HJ.

The protein resides in the cytoplasm. Functionally, the RuvA-RuvB-RuvC complex processes Holliday junction (HJ) DNA during genetic recombination and DNA repair, while the RuvA-RuvB complex plays an important role in the rescue of blocked DNA replication forks via replication fork reversal (RFR). RuvA specifically binds to HJ cruciform DNA, conferring on it an open structure. The RuvB hexamer acts as an ATP-dependent pump, pulling dsDNA into and through the RuvAB complex. HJ branch migration allows RuvC to scan DNA until it finds its consensus sequence, where it cleaves and resolves the cruciform DNA. The chain is Holliday junction branch migration complex subunit RuvA from Bifidobacterium adolescentis (strain ATCC 15703 / DSM 20083 / NCTC 11814 / E194a).